A 421-amino-acid polypeptide reads, in one-letter code: UDP-N-acetylglucosamine 1-carboxyvinyltransferase 2 (421 aa).

Phosphoenolpyruvate is bound at residue 22-23 (KN). Residue arginine 95 participates in UDP-N-acetyl-alpha-D-glucosamine binding. The Proton donor role is filled by cysteine 119. Position 119 is a 2-(S-cysteinyl)pyruvic acid O-phosphothioketal (cysteine 119). UDP-N-acetyl-alpha-D-glucosamine-binding positions include 124-128 (RPIEQ), aspartate 308, and valine 330.

The protein belongs to the EPSP synthase family. MurA subfamily.

Its subcellular location is the cytoplasm. The enzyme catalyses phosphoenolpyruvate + UDP-N-acetyl-alpha-D-glucosamine = UDP-N-acetyl-3-O-(1-carboxyvinyl)-alpha-D-glucosamine + phosphate. Its pathway is cell wall biogenesis; peptidoglycan biosynthesis. Cell wall formation. Adds enolpyruvyl to UDP-N-acetylglucosamine. The chain is UDP-N-acetylglucosamine 1-carboxyvinyltransferase 2 from Staphylococcus saprophyticus subsp. saprophyticus (strain ATCC 15305 / DSM 20229 / NCIMB 8711 / NCTC 7292 / S-41).